The sequence spans 822 residues: Molybdenum cofactor sulfurase (822 aa).

At lysine 239 the chain carries N6-(pyridoxal phosphate)lysine. Cysteine 401 is a catalytic residue. Positions 633-666 (TRISNPTRSSRRSQRALMPGSFPEDPSPTSEQPP) are disordered. An MOSC domain is found at 643–820 (RRSQRALMPG…VMVGDVVTPQ (178 aa)).

Belongs to the class-V pyridoxal-phosphate-dependent aminotransferase family. MOCOS subfamily. Pyridoxal 5'-phosphate serves as cofactor.

It catalyses the reaction Mo-molybdopterin + L-cysteine + AH2 = thio-Mo-molybdopterin + L-alanine + A + H2O. The protein operates within cofactor biosynthesis; molybdopterin biosynthesis. In terms of biological role, sulfurates the molybdenum cofactor. Sulfation of molybdenum is essential for xanthine dehydrogenase (XDH) and aldehyde oxidase (ADO) enzymes in which molybdenum cofactor is liganded by 1 oxygen and 1 sulfur atom in active form. The chain is Molybdenum cofactor sulfurase from Aspergillus oryzae (strain ATCC 42149 / RIB 40) (Yellow koji mold).